We begin with the raw amino-acid sequence, 124 residues long: Small ribosomal subunit protein uS12 (124 aa).

Residues 1–32 (MPTINQLVRKGRRDKTAKVKTAALKGSPQRRG) form a disordered region. Aspartate 89 bears the 3-methylthioaspartic acid mark. The tract at residues 104–124 (TQGVKGRKQARSRYGAKKEKS) is disordered. Over residues 108–118 (KGRKQARSRYG) the composition is skewed to basic residues.

Belongs to the universal ribosomal protein uS12 family. As to quaternary structure, part of the 30S ribosomal subunit. Contacts proteins S8 and S17. May interact with IF1 in the 30S initiation complex.

With S4 and S5 plays an important role in translational accuracy. In terms of biological role, interacts with and stabilizes bases of the 16S rRNA that are involved in tRNA selection in the A site and with the mRNA backbone. Located at the interface of the 30S and 50S subunits, it traverses the body of the 30S subunit contacting proteins on the other side and probably holding the rRNA structure together. The combined cluster of proteins S8, S12 and S17 appears to hold together the shoulder and platform of the 30S subunit. The polypeptide is Small ribosomal subunit protein uS12 (Rhodococcus erythropolis (strain PR4 / NBRC 100887)).